Reading from the N-terminus, the 335-residue chain is Adenine deaminase (335 aa).

Zn(2+) contacts are provided by His14, His16, and His194. Catalysis depends on Glu197, which acts as the Proton donor. Zn(2+) is bound at residue Asp275. Asp276 is a substrate binding site.

This sequence belongs to the metallo-dependent hydrolases superfamily. Adenosine and AMP deaminases family. Adenine deaminase type 2 subfamily. Zn(2+) serves as cofactor.

It carries out the reaction adenine + H2O + H(+) = hypoxanthine + NH4(+). Its function is as follows. Catalyzes the hydrolytic deamination of adenine to hypoxanthine. Plays an important role in the purine salvage pathway and in nitrogen catabolism. The chain is Adenine deaminase from Chlorobium phaeobacteroides (strain BS1).